The following is a 158-amino-acid chain: Transcriptional repressor NrdR (158 aa).

Residues 3–34 (CPYCGYPDSKVIDSRPTDDNTSIRRRRECLKC) fold into a zinc finger. Residues 49–139 (ILVIKKDNRR…VYRQFKDINT (91 aa)) enclose the ATP-cone domain.

It belongs to the NrdR family. Requires Zn(2+) as cofactor.

Functionally, negatively regulates transcription of bacterial ribonucleotide reductase nrd genes and operons by binding to NrdR-boxes. The polypeptide is Transcriptional repressor NrdR (Thermoanaerobacter pseudethanolicus (strain ATCC 33223 / 39E) (Clostridium thermohydrosulfuricum)).